The sequence spans 435 residues: D-amino acid dehydrogenase (435 aa).

Position 3-17 (3-17 (VLILGSGVIGTTSAW)) interacts with FAD.

The protein belongs to the DadA oxidoreductase family. It depends on FAD as a cofactor.

The catalysed reaction is a D-alpha-amino acid + A + H2O = a 2-oxocarboxylate + AH2 + NH4(+). It functions in the pathway amino-acid degradation; D-alanine degradation; NH(3) and pyruvate from D-alanine: step 1/1. In terms of biological role, oxidative deamination of D-amino acids. This is D-amino acid dehydrogenase from Xylella fastidiosa (strain 9a5c).